Consider the following 515-residue polypeptide: Interferon-induced, double-stranded RNA-activated protein kinase (515 aa).

Residue Ala-2 is modified to N-acetylalanine. The region spanning 8–76 is the DRBM 1 domain; the sequence is FYMDKLNKYR…AKLAVDILDN (69 aa). Lys-68 participates in a covalent cross-link: Glycyl lysine isopeptide (Lys-Gly) (interchain with G-Cter in ISG15). Thr-84 carries the phosphothreonine modification. In terms of domain architecture, DRBM 2 spans 95-162; that stretch reads NYIGLVNSFA…AKEAYQKLLK (68 aa). A Phosphotyrosine; by autocatalysis modification is found at Tyr-96. Lys-154 participates in a covalent cross-link: Glycyl lysine isopeptide (Lys-Gly) (interchain with G-Cter in ISG15). Tyr-157 carries the post-translational modification Phosphotyrosine; by autocatalysis. A disordered region spans residues 204–224; that stretch reads ENVFTNGLGENKRKSGVKVSP. A Phosphothreonine modification is found at Thr-233. The interval 241–515 is interaction with TRAF5; the sequence is DFEDIEEIGL…ISEKKKRNTC (275 aa). The region spanning 242-504 is the Protein kinase domain; it reads FEDIEEIGLG…EILKTLAEWR (263 aa). 248 to 256 contacts ATP; it reads IGLGGFGQV. At Tyr-268 the chain carries Phosphotyrosine; by autocatalysis. ATP is bound at residue Lys-271. Asp-376 acts as the Proton acceptor in catalysis. Residues Thr-409 and Thr-414 each carry the phosphothreonine; by autocatalysis modification. Ser-419 is modified (phosphoserine).

Belongs to the protein kinase superfamily. Ser/Thr protein kinase family. GCN2 subfamily. Homodimer. Interacts with DNAJC3 and STRBP. Forms a complex with FANCA, FANCC, FANCG and HSP70. Interacts with ADAR/ADAR1. The inactive form interacts with NCK1. Interacts (via the kinase catalytic domain) with STAT3 (via SH2 domain), TRAF2 (C-terminus), TRAF5 (C-terminus) and TRAF6 (C-terminus). Interacts with MAP2K6, TARBP2, NLRP1, NLRC4 and AIM2. Interacts (via DRBM 1 domain) with DUS2L (via DRBM domain). Interacts with DHX9 (via N-terminus) and this interaction is dependent upon activation of the kinase. The inactive form interacts with GSN. Interacts with IKBKB/IKKB, NPM1, NLRP3 and IRS1. Autophosphorylated on several Ser, Thr and Tyr residues. Autophosphorylation of Thr-414 is dependent on Thr-409 and is stimulated by dsRNA binding and dimerization. Autophosphorylation apparently leads to the activation of the kinase. Tyrosine autophosphorylation is essential for efficient dsRNA-binding, dimerization, and kinase activation. As to expression, expressed in heart, lung, brain, kidney, testes, thymus and bone marrow.

The protein resides in the cytoplasm. Its subcellular location is the nucleus. It localises to the perinuclear region. The catalysed reaction is L-seryl-[protein] + ATP = O-phospho-L-seryl-[protein] + ADP + H(+). It carries out the reaction L-threonyl-[protein] + ATP = O-phospho-L-threonyl-[protein] + ADP + H(+). The enzyme catalyses L-tyrosyl-[protein] + ATP = O-phospho-L-tyrosyl-[protein] + ADP + H(+). Initially produced in an inactive form and is activated by binding to viral dsRNA, which causes dimerization and autophosphorylation in the activation loop and stimulation of function. ISGylation can activate it in the absence of viral infection. Can also be activated by heparin, pro-inflammatory stimuli, growth factors, cytokines, oxidative stress and the cellular protein PRKRA. Activity is markedly stimulated by manganese ions. Activation is blocked by the cellular proteins TARBP2, DUS2L, NPM1, NCK1 and ADAR. IFN-induced dsRNA-dependent serine/threonine-protein kinase that phosphorylates the alpha subunit of eukaryotic translation initiation factor 2 (EIF2S1/eIF-2-alpha) and plays a key role in the innate immune response to viral infection. Inhibits viral replication via the integrated stress response (ISR): EIF2S1/eIF-2-alpha phosphorylation in response to viral infection converts EIF2S1/eIF-2-alpha in a global protein synthesis inhibitor, resulting to a shutdown of cellular and viral protein synthesis, while concomitantly initiating the preferential translation of ISR-specific mRNAs, such as the transcriptional activator ATF4. Exerts its antiviral activity on a wide range of DNA and RNA viruses including west nile virus (WNV), sindbis virus (SV), foot-and-mouth virus (FMDV), semliki Forest virus (SFV) and lymphocytic choriomeningitis virus (LCMV). Also involved in the regulation of signal transduction, apoptosis, cell proliferation and differentiation: phosphorylates other substrates including p53/TP53, PPP2R5A, DHX9, ILF3, and IRS1. In addition to serine/threonine-protein kinase activity, also has tyrosine-protein kinase activity and phosphorylates CDK1 at 'Tyr-4' upon DNA damage, facilitating its ubiquitination and proteasomal degradation. Either as an adapter protein and/or via its kinase activity, can regulate various signaling pathways (p38 MAP kinase, NF-kappa-B and insulin signaling pathways) and transcription factors (JUN, STAT1, STAT3, IRF1, ATF3) involved in the expression of genes encoding pro-inflammatory cytokines and IFNs. Activates the NF-kappa-B pathway via interaction with IKBKB and TRAF family of proteins and activates the p38 MAP kinase pathway via interaction with MAP2K6. Can act as both a positive and negative regulator of the insulin signaling pathway (ISP). Negatively regulates ISP by inducing the inhibitory phosphorylation of insulin receptor substrate 1 (IRS1) at 'Ser-312' and positively regulates ISP via phosphorylation of PPP2R5A which activates FOXO1, which in turn up-regulates the expression of insulin receptor substrate 2 (IRS2). Can regulate NLRP3 inflammasome assembly and the activation of NLRP3, NLRP1, AIM2 and NLRC4 inflammasomes. Plays a role in the regulation of the cytoskeleton by binding to gelsolin (GSN), sequestering the protein in an inactive conformation away from actin. This Mus musculus (Mouse) protein is Interferon-induced, double-stranded RNA-activated protein kinase (Eif2ak2).